A 338-amino-acid polypeptide reads, in one-letter code: Phenylalanine--tRNA ligase alpha subunit (338 aa).

E253 contacts Mg(2+).

This sequence belongs to the class-II aminoacyl-tRNA synthetase family. Phe-tRNA synthetase alpha subunit type 1 subfamily. Tetramer of two alpha and two beta subunits. It depends on Mg(2+) as a cofactor.

The protein localises to the cytoplasm. The enzyme catalyses tRNA(Phe) + L-phenylalanine + ATP = L-phenylalanyl-tRNA(Phe) + AMP + diphosphate + H(+). The chain is Phenylalanine--tRNA ligase alpha subunit from Legionella pneumophila (strain Paris).